Here is a 160-residue protein sequence, read N- to C-terminus: RxLR effector protein PexRD44 (160 aa).

A signal peptide spans 1 to 21 (MRLLLWVLISMLSIALSSCAA). Residues 54 to 76 (RFLRGESSKIVNLKQEEGVFEER) carry the RxLR-dEER motif.

It belongs to the RxLR effector family.

It is found in the secreted. The protein localises to the host cell membrane. The protein resides in the host nucleus. Its subcellular location is the host nucleolus. Its function is as follows. Effector that is involved in host plant infection. Contributes to virulence during the early infection stage, by inhibiting plant defense responses induced by both PAMP-triggered immunity (PTI) and effector-triggered immunity (ETI). This is RxLR effector protein PexRD44 from Phytophthora infestans (strain T30-4) (Potato late blight agent).